The chain runs to 355 residues: MAAAAATAPAAAVVRRMKLGSQGMEVSAQGLGCMGMSAVYGERKPEADMVALVRHAVAAGVTFLDTSDVYGPHTNEVLVGKAGAAAAATEEEVQVQVATKFGITPAWEVRGDPAYVRAACEGSLRRLGVGCIDLYYQHRIDSTVPVEITMGELKKLVEEGKIKYIGLSEASASTIRRAHVVHPITAVQIEWSLWSRDVEEDIVPTCRELGIGIVAYSPLGRGFFSSGAKLVDELPDDDFRKSLPRFQPENLEKNAAIFEKVNAMAARKGCTSSQLALAWVHHQGSDVCPIPGTTKIHNFDQNVGALSVKLTPDEMSELESYASADVVQGDRYHGTFLNTWKNSETPPLSSWRSGN.

Residue tyrosine 70 is the Proton donor of the active site. Histidine 138 contacts substrate. 217 to 227 provides a ligand contact to NADP(+); it reads SPLGRGFFSSG.

This sequence belongs to the aldo/keto reductase family.

The chain is Probable aldo-keto reductase 3 from Oryza sativa subsp. indica (Rice).